The following is a 281-amino-acid chain: Elongation factor Ts (281 aa).

The involved in Mg(2+) ion dislocation from EF-Tu stretch occupies residues Thr80 to Val83.

Belongs to the EF-Ts family.

The protein resides in the cytoplasm. Associates with the EF-Tu.GDP complex and induces the exchange of GDP to GTP. It remains bound to the aminoacyl-tRNA.EF-Tu.GTP complex up to the GTP hydrolysis stage on the ribosome. This is Elongation factor Ts from Vibrio parahaemolyticus serotype O3:K6 (strain RIMD 2210633).